A 222-amino-acid polypeptide reads, in one-letter code: Superoxide dismutase [Mn], mitochondrial (222 aa).

The transit peptide at 1 to 24 (MLSRAACSTSRRLVPALSVLGSRQ) directs the protein to the mitochondrion. H50 provides a ligand contact to Mn(2+). At Y58 the chain carries 3'-nitrotyrosine. Residues K68 and K75 each carry the N6-acetyllysine; alternate modification. An N6-succinyllysine; alternate mark is found at K68 and K75. H98 lines the Mn(2+) pocket. 2 positions are modified to N6-acetyllysine; alternate: K122 and K130. Residues K122 and K130 each carry the N6-succinyllysine; alternate modification. Mn(2+) is bound by residues D183 and H187. An N6-acetyllysine modification is found at K202.

It belongs to the iron/manganese superoxide dismutase family. Homotetramer. Requires Mn(2+) as cofactor. In terms of processing, nitrated under oxidative stress. Nitration coupled with oxidation inhibits the catalytic activity. Post-translationally, acetylation at Lys-122 decreases enzymatic activity. Deacetylated by SIRT3 upon exposure to ionizing radiations or after long fasting. Polyubiquitinated; leading to proteasomal degradation. Deubiquitinated by USP36 which increases protein stability.

It is found in the mitochondrion matrix. The enzyme catalyses 2 superoxide + 2 H(+) = H2O2 + O2. Destroys superoxide anion radicals which are normally produced within the cells and which are toxic to biological systems. This chain is Superoxide dismutase [Mn], mitochondrial (SOD2), found in Bos taurus (Bovine).